A 493-amino-acid polypeptide reads, in one-letter code: D-glyceraldehyde dehydrogenase (NADP(+)) (493 aa).

Residues 144–147 (TPWN), Arg155, 170–174 (KPSSD), 202–208 (KGSEIGD), 223–246 (GSTSTGQRIMEKASKNMAKLILEL), Cys279, and 379–381 (EIF) each bind NADP(+). Substrate contacts are provided by Asn147 and Arg155. Residue Glu245 is the Proton acceptor of the active site. Cys279 provides a ligand contact to substrate. Cys279 serves as the catalytic Proton donor.

It belongs to the aldehyde dehydrogenase family. Glyceraldehyde dehydrogenase subfamily. As to quaternary structure, homotetramer. Dimer of dimers.

It catalyses the reaction D-glyceraldehyde + NADP(+) + H2O = (R)-glycerate + NADPH + 2 H(+). The protein operates within carbohydrate degradation; glycolysis. Stable for 2 hours at 60 degrees Celsius but activity is decreased to less than 50 percent within 15 minutes at 70 degrees Celsius. NADP-dependent dehydrogenase of the nED (non-phosphorylated Entner-Doudoroff) pathway with highest activity towards glyceraldehydes (e.g. D,L-glyceraldehyde and D-glyceraldehyde), to a lesser extent towards D,L-glyceraldehyde-3-phosphate and glycolaldehyde, but no activity towards aliphatic or aromatic aldehydes. The polypeptide is D-glyceraldehyde dehydrogenase (NADP(+)) (Picrophilus torridus (strain ATCC 700027 / DSM 9790 / JCM 10055 / NBRC 100828 / KAW 2/3)).